Reading from the N-terminus, the 369-residue chain is CASP-like protein 4U1 (369 aa).

The segment at 1–162 (MASTPRTPAP…RAETKLPLSS (162 aa)) is disordered. The Cytoplasmic portion of the chain corresponds to 1-222 (MASTPRTPAP…AVAAVAERRE (222 aa)). The span at 7–23 (TPAPERSPPPVPTPPPP) shows a compositional bias: pro residues. Positions 36 to 51 (SPREEASFSSDGREGA) are enriched in basic and acidic residues. Composition is skewed to low complexity over residues 87 to 96 (ANKAAAATAE) and 114 to 127 (SSQT…SPTP). A helical membrane pass occupies residues 223-243 (LLLALRLATAVLSLAAFSVIA). Topologically, residues 244 to 262 (SARTSGWAGDYYARHLQYR) are extracellular. The helical transmembrane segment at 263–283 (YAVAVNVIVFAYSVAQSLGKI) threads the bilayer. At 284 to 300 (RHLVSPRFTFRTMSSYY) the chain is on the cytoplasmic side. Residues 301–321 (CSLFLDQVLAYLLMSASSAAA) traverse the membrane as a helical segment. The Extracellular portion of the chain corresponds to 322-339 (SRNDLWVSRFGTDAFVRK). The chain crosses the membrane as a helical span at residues 340–360 (ITGALWLSFVAFLVLALNAVI). Residues 361–369 (SXANLFSMV) are Cytoplasmic-facing.

It belongs to the Casparian strip membrane proteins (CASP) family. In terms of assembly, homodimer and heterodimers.

Its subcellular location is the cell membrane. This Zea mays (Maize) protein is CASP-like protein 4U1.